Consider the following 374-residue polypeptide: dTDP-3-amino-3,4,6-trideoxy-alpha-D-glucose transaminase (374 aa).

Pyridoxal 5'-phosphate-binding positions include G60, Q160, 181–186 (SFYPTK), Y214, Y221, 229–231 (NSR), and Y316. K186 carries the N6-(pyridoxal phosphate)lysine modification.

Belongs to the degT/dnrJ/eryC1 family. It depends on pyridoxal 5'-phosphate as a cofactor.

It carries out the reaction dTDP-3-amino-3,4,6-trideoxy-alpha-D-glucose + 2-oxoglutarate = dTDP-3-dehydro-4,6-dideoxy-alpha-D-glucose + L-glutamate. It participates in antibiotic biosynthesis. Functionally, involved in the biosynthesis of the amino sugar dTDP-L-megosamine which is found in the macrolide antibiotic and antiparasitic megalomicin A. Catalyzes the reversible transfer of the amino group from L-glutamate to the C-3 position of dTDP-3-keto-4,6-deoxyglucose to yield dTDP-3-amino-3,4,6-trideoxyglucose. The chain is dTDP-3-amino-3,4,6-trideoxy-alpha-D-glucose transaminase from Micromonospora megalomicea subsp. nigra.